The primary structure comprises 1082 residues: Mediator of RNA polymerase II transcription subunit 14 (1082 aa).

2 disordered regions span residues 1 to 80 and 319 to 343; these read MTTT…APPP and EATS…NLPL. At threonine 2 the chain carries N-acetylthreonine. At serine 7 the chain carries Phosphoserine. A compositionally biased stretch (basic and acidic residues) spans 13–28; the sequence is NEERLSNEMHALKNRS. Positions 29-59 are enriched in polar residues; that stretch reads EQNGQEQQGPVKNTQLHGPSATDPETTATQK. The span at 321–340 shows a compositional bias: low complexity; that stretch reads TSTNGDSENNEENSSSNGNN. Residue threonine 1036 is modified to Phosphothreonine.

The protein belongs to the Mediator complex subunit 14 family. Component of the Mediator complex, which is composed of at least 21 subunits that form three structurally distinct submodules. The Mediator head module contains MED6, MED8, MED11, SRB4/MED17, SRB5/MED18, ROX3/MED19, SRB2/MED20 and SRB6/MED22, the middle module contains MED1, MED4, NUT1/MED5, MED7, CSE2/MED9, NUT2/MED10, SRB7/MED21 and SOH1/MED31, and the tail module contains MED2, PGD1/MED3, RGR1/MED14, GAL11/MED15 and SIN4/MED16. The head and the middle modules interact directly with RNA polymerase II, whereas the elongated tail module interacts with gene-specific regulatory proteins.

It is found in the nucleus. In terms of biological role, component of the Mediator complex, a coactivator involved in the regulated transcription of nearly all RNA polymerase II-dependent genes. Mediator functions as a bridge to convey information from gene-specific regulatory proteins to the basal RNA polymerase II transcription machinery. The Mediator complex, having a compact conformation in its free form, is recruited to promoters by direct interactions with regulatory proteins and serves for the assembly of a functional preinitiation complex with RNA polymerase II and the general transcription factors. The Mediator complex unfolds to an extended conformation and partially surrounds RNA polymerase II, specifically interacting with the unphosphorylated form of the C-terminal domain (CTD) of RNA polymerase II. The Mediator complex dissociates from the RNA polymerase II holoenzyme and stays at the promoter when transcriptional elongation begins. The sequence is that of Mediator of RNA polymerase II transcription subunit 14 (RGR1) from Saccharomyces cerevisiae (strain ATCC 204508 / S288c) (Baker's yeast).